The following is a 244-amino-acid chain: High affinity immunoglobulin epsilon receptor subunit beta (244 aa).

Residues 1 to 59 (MDTESNRRANLALPQEPSSVPAFEVLEISPQEVSSGRLLKSASSPPLHTWLTVLKKEQE) are Cytoplasmic-facing. A helical transmembrane segment spans residues 60–79 (FLGVTQILTAMICLCFGTVV). Over 80 to 97 (CSVLDISHIEGDIFSSFK) the chain is Extracellular. A helical transmembrane segment spans residues 98–117 (AGYPFWGAIFFSISGMLSII). The Cytoplasmic portion of the chain corresponds to 118 to 130 (SERRNATYLVRGS). The helical transmembrane segment at 131-150 (LGANTASSIAGGTGITILII) threads the bilayer. Residues 151–180 (NLKKSLAYIHIHSCQKFFETKCFMASFSTE) lie on the Extracellular side of the membrane. The helical transmembrane segment at 181-200 (IVVMMLFLTILGLGSAVSLT) threads the bilayer. Topologically, residues 201 to 244 (ICGAGEELKGNKVPEDRVYEELNIYSATYSELEDPGEMSPPIDL) are cytoplasmic. Residues Y219 and Y225 each carry the phosphotyrosine modification. S226 carries the post-translational modification Phosphoserine. Residue Y229 is modified to Phosphotyrosine.

Belongs to the MS4A family. As to quaternary structure, tetramer of an alpha chain, a beta chain, and two disulfide linked gamma chains. Binds LILRB1. Interacts with FGR, FES/FPS and LYN. Post-translationally, phosphorylated on tyrosine residues by LYN. As to expression, found on the surface of mast cells and basophils.

Its subcellular location is the membrane. High affinity receptor that binds to the Fc region of immunoglobulins epsilon. Aggregation of FCER1 by multivalent antigens is required for the full mast cell response, including the release of preformed mediators (such as histamine) by degranulation and de novo production of lipid mediators and cytokines. Also mediates the secretion of important lymphokines. Binding of allergen to receptor-bound IgE leads to cell activation and the release of mediators responsible for the manifestations of allergy. This is High affinity immunoglobulin epsilon receptor subunit beta (MS4A2) from Homo sapiens (Human).